Here is a 102-residue protein sequence, read N- to C-terminus: Small ribosomal subunit protein uS10 (102 aa).

Belongs to the universal ribosomal protein uS10 family. In terms of assembly, part of the 30S ribosomal subunit.

Its function is as follows. Involved in the binding of tRNA to the ribosomes. This Ligilactobacillus salivarius (strain UCC118) (Lactobacillus salivarius) protein is Small ribosomal subunit protein uS10.